The chain runs to 882 residues: Translation initiation factor IF-2 (882 aa).

A disordered region spans residues 57 to 211 (YIPANKTKDK…KDKSKPKVAT (155 aa)). Residues 104-115 (TTSEKQKDKGEQ) show a composition bias toward basic and acidic residues. Over residues 199-211 (RHKKDKSKPKVAT) the composition is skewed to basic residues. Positions 381–550 (ERPPVVTIMG…LIQAEVLELK (170 aa)) constitute a tr-type G domain. The G1 stretch occupies residues 390–397 (GHVDHGKT). 390–397 (GHVDHGKT) provides a ligand contact to GTP. The G2 stretch occupies residues 415 to 419 (GITQH). The segment at 436–439 (DTPG) is G3. Residues 436 to 440 (DTPGH) and 490 to 493 (NKMD) contribute to the GTP site. A G4 region spans residues 490 to 493 (NKMD). The G5 stretch occupies residues 526-528 (SAK).

The protein belongs to the TRAFAC class translation factor GTPase superfamily. Classic translation factor GTPase family. IF-2 subfamily.

The protein resides in the cytoplasm. In terms of biological role, one of the essential components for the initiation of protein synthesis. Protects formylmethionyl-tRNA from spontaneous hydrolysis and promotes its binding to the 30S ribosomal subunits. Also involved in the hydrolysis of GTP during the formation of the 70S ribosomal complex. The sequence is that of Translation initiation factor IF-2 from Helicobacter hepaticus (strain ATCC 51449 / 3B1).